The primary structure comprises 342 residues: Holliday junction branch migration complex subunit RuvB (342 aa).

The interval 1-179 (MTNILSPEKS…FGIPMRLNFY (179 aa)) is large ATPase domain (RuvB-L). Residues I18, R19, G60, K63, T64, T65, 126–128 (EDF), R169, Y179, and R216 each bind ATP. Residue T64 coordinates Mg(2+). The small ATPAse domain (RuvB-S) stretch occupies residues 180–250 (NTEELKKVLN…VSDFGLNRLE (71 aa)). A head domain (RuvB-H) region spans residues 253–342 (RIGLDSNDYR…HQFNIFNENE (90 aa)). The DNA site is built by R289, R308, and R313.

This sequence belongs to the RuvB family. In terms of assembly, homohexamer. Forms an RuvA(8)-RuvB(12)-Holliday junction (HJ) complex. HJ DNA is sandwiched between 2 RuvA tetramers; dsDNA enters through RuvA and exits via RuvB. An RuvB hexamer assembles on each DNA strand where it exits the tetramer. Each RuvB hexamer is contacted by two RuvA subunits (via domain III) on 2 adjacent RuvB subunits; this complex drives branch migration. In the full resolvosome a probable DNA-RuvA(4)-RuvB(12)-RuvC(2) complex forms which resolves the HJ.

The protein resides in the cytoplasm. The enzyme catalyses ATP + H2O = ADP + phosphate + H(+). The RuvA-RuvB-RuvC complex processes Holliday junction (HJ) DNA during genetic recombination and DNA repair, while the RuvA-RuvB complex plays an important role in the rescue of blocked DNA replication forks via replication fork reversal (RFR). RuvA specifically binds to HJ cruciform DNA, conferring on it an open structure. The RuvB hexamer acts as an ATP-dependent pump, pulling dsDNA into and through the RuvAB complex. RuvB forms 2 homohexamers on either side of HJ DNA bound by 1 or 2 RuvA tetramers; 4 subunits per hexamer contact DNA at a time. Coordinated motions by a converter formed by DNA-disengaged RuvB subunits stimulates ATP hydrolysis and nucleotide exchange. Immobilization of the converter enables RuvB to convert the ATP-contained energy into a lever motion, pulling 2 nucleotides of DNA out of the RuvA tetramer per ATP hydrolyzed, thus driving DNA branch migration. The RuvB motors rotate together with the DNA substrate, which together with the progressing nucleotide cycle form the mechanistic basis for DNA recombination by continuous HJ branch migration. Branch migration allows RuvC to scan DNA until it finds its consensus sequence, where it cleaves and resolves cruciform DNA. This is Holliday junction branch migration complex subunit RuvB from Rickettsia rickettsii (strain Sheila Smith).